The following is a 710-amino-acid chain: Polyribonucleotide nucleotidyltransferase (710 aa).

Asp-486 and Asp-492 together coordinate Mg(2+). One can recognise a KH domain in the interval 553–612 (PRIHTIKISVDKIKDVIGKGGSVIRALTEETGTTIEIEDDGTVKIAATDGDKAKFAIRRI). Residues 622 to 690 (GRIYNGKVTR…RQGRVRLSIK (69 aa)) enclose the S1 motif domain. The interval 690 to 710 (KEAGEQAQPEAEAVPAAPEAE) is disordered. A compositionally biased stretch (low complexity) spans 694 to 710 (EQAQPEAEAVPAAPEAE).

It belongs to the polyribonucleotide nucleotidyltransferase family. Component of the RNA degradosome, which is a multiprotein complex involved in RNA processing and mRNA degradation. It depends on Mg(2+) as a cofactor.

The protein resides in the cytoplasm. It carries out the reaction RNA(n+1) + phosphate = RNA(n) + a ribonucleoside 5'-diphosphate. Its function is as follows. Involved in mRNA degradation. Catalyzes the phosphorolysis of single-stranded polyribonucleotides processively in the 3'- to 5'-direction. The sequence is that of Polyribonucleotide nucleotidyltransferase from Erwinia tasmaniensis (strain DSM 17950 / CFBP 7177 / CIP 109463 / NCPPB 4357 / Et1/99).